We begin with the raw amino-acid sequence, 190 residues long: Protein soem-1 (190 aa).

Residues 96–190 (YMEQNMNRVE…LVLKNQLKPV (95 aa)) enclose the SH2 domain.

As to quaternary structure, interacts with abl-1. As to expression, expressed in PQR, but not AQR, Q neuroblast descendents.

Functionally, functions downstream of migratory protein mig-13 and may play a role in the control of Q neuroblast migration during larval development. This Caenorhabditis elegans protein is Protein soem-1.